A 102-amino-acid chain; its full sequence is uncharacterized protein (102 aa).

Residues 1–41 (MAAPRQIAFYGKGGTGKPKRKPEPVTASKEDRCLGSPSKNK) form a disordered region.

It to the N-terminal of nitrogenase iron protein (NifH). Has lost the ATP-binding site.

This protein is either not expressed, expressed at low levels or rapidly degraded. This is an uncharacterized protein from Rhizobium meliloti (Ensifer meliloti).